Here is a 474-residue protein sequence, read N- to C-terminus: Glutamate--tRNA ligase 1 (474 aa).

Positions 11-21 (PSPTGYLHIGG) match the 'HIGH' region motif. Positions 240-244 (KLSKR) match the 'KMSKS' region motif. Lys-243 is a binding site for ATP.

The protein belongs to the class-I aminoacyl-tRNA synthetase family. Glutamate--tRNA ligase type 1 subfamily. As to quaternary structure, monomer.

It is found in the cytoplasm. The enzyme catalyses tRNA(Glu) + L-glutamate + ATP = L-glutamyl-tRNA(Glu) + AMP + diphosphate. In terms of biological role, catalyzes the attachment of glutamate to tRNA(Glu) in a two-step reaction: glutamate is first activated by ATP to form Glu-AMP and then transferred to the acceptor end of tRNA(Glu). This is Glutamate--tRNA ligase 1 from Mesorhizobium japonicum (strain LMG 29417 / CECT 9101 / MAFF 303099) (Mesorhizobium loti (strain MAFF 303099)).